The sequence spans 350 residues: UBX domain-containing protein 2B (350 aa).

A compositionally biased stretch (acidic residues) spans Met1 to Gly29. The disordered stretch occupies residues Met1–Arg46. The span at Gly32 to Leu45 shows a compositional bias: basic and acidic residues. Positions Glu160 to Ile225 constitute an SEP domain. In terms of domain architecture, UBX spans Glu271–Arg348.

Belongs to the NSFL1C family.

Its subcellular location is the nucleus. It is found in the cytoplasm. The protein localises to the cytosol. The protein resides in the endoplasmic reticulum. It localises to the golgi apparatus. Its subcellular location is the cytoskeleton. It is found in the microtubule organizing center. The protein localises to the centrosome. In terms of biological role, adapter protein required for Golgi and endoplasmic reticulum biogenesis. Involved in Golgi and endoplasmic reticulum maintenance during interphase and in their reassembly at the end of mitosis. Regulates the centrosomal levels of kinase aurka-a/Aurora A during mitotic progression by promoting aurka-a removal from centrosomes in prophase. Also, regulates spindle orientation during mitosis. The protein is UBX domain-containing protein 2B (ubxn2b) of Xenopus laevis (African clawed frog).